A 300-amino-acid polypeptide reads, in one-letter code: Porphobilinogen deaminase (300 aa).

Cys-242 bears the S-(dipyrrolylmethanemethyl)cysteine mark.

The protein belongs to the HMBS family. In terms of assembly, monomer. Requires dipyrromethane as cofactor.

The enzyme catalyses 4 porphobilinogen + H2O = hydroxymethylbilane + 4 NH4(+). The protein operates within porphyrin-containing compound metabolism; protoporphyrin-IX biosynthesis; coproporphyrinogen-III from 5-aminolevulinate: step 2/4. Its function is as follows. Tetrapolymerization of the monopyrrole PBG into the hydroxymethylbilane pre-uroporphyrinogen in several discrete steps. This Rickettsia bellii (strain OSU 85-389) protein is Porphobilinogen deaminase.